A 155-amino-acid chain; its full sequence is Small ribosomal subunit protein bS6 (155 aa).

Positions E94–V155 are disordered.

The protein belongs to the bacterial ribosomal protein bS6 family.

Its function is as follows. Binds together with bS18 to 16S ribosomal RNA. The polypeptide is Small ribosomal subunit protein bS6 (Rhizobium johnstonii (strain DSM 114642 / LMG 32736 / 3841) (Rhizobium leguminosarum bv. viciae)).